The following is a 463-amino-acid chain: Quinolone resistance protein NorB (463 aa).

A run of 14 helical transmembrane segments spans residues Ile19–Ile39, Ile53–Ala73, Ile86–Ile106, Ile107–Ile127, Tyr142–Ala162, Leu165–Ile185, Phe201–Thr221, Ser230–Leu250, Thr273–Val293, Tyr299–Ile319, Pro334–Leu354, Ile357–Tyr377, Met403–Val423, and Ile435–Val455.

The protein belongs to the major facilitator superfamily. TCR/Tet family.

It localises to the cell membrane. In terms of biological role, multidrug efflux pump that acts independently of NorA and is one of the factors that confers resistance against diverse quinolones and chemical compounds. The protein is Quinolone resistance protein NorB (norB) of Staphylococcus aureus (strain bovine RF122 / ET3-1).